Consider the following 471-residue polypeptide: Siroheme synthase 1 (471 aa).

The segment at methionine 1–leucine 203 is precorrin-2 dehydrogenase /sirohydrochlorin ferrochelatase. NAD(+) contacts are provided by residues glutamate 22–valine 23 and lysine 43–lysine 44. A Phosphoserine modification is found at serine 128. Residues glycine 215 to alanine 471 are uroporphyrinogen-III C-methyltransferase. Position 224 (proline 224) interacts with S-adenosyl-L-methionine. The Proton acceptor role is filled by aspartate 247. Catalysis depends on lysine 269, which acts as the Proton donor. Residues glycine 300 to aspartate 302, isoleucine 305, threonine 330 to alanine 331, methionine 382, and glycine 411 each bind S-adenosyl-L-methionine.

This sequence in the N-terminal section; belongs to the precorrin-2 dehydrogenase / sirohydrochlorin ferrochelatase family. It in the C-terminal section; belongs to the precorrin methyltransferase family.

The enzyme catalyses uroporphyrinogen III + 2 S-adenosyl-L-methionine = precorrin-2 + 2 S-adenosyl-L-homocysteine + H(+). The catalysed reaction is precorrin-2 + NAD(+) = sirohydrochlorin + NADH + 2 H(+). It carries out the reaction siroheme + 2 H(+) = sirohydrochlorin + Fe(2+). It functions in the pathway cofactor biosynthesis; adenosylcobalamin biosynthesis; precorrin-2 from uroporphyrinogen III: step 1/1. Its pathway is cofactor biosynthesis; adenosylcobalamin biosynthesis; sirohydrochlorin from precorrin-2: step 1/1. It participates in porphyrin-containing compound metabolism; siroheme biosynthesis; precorrin-2 from uroporphyrinogen III: step 1/1. The protein operates within porphyrin-containing compound metabolism; siroheme biosynthesis; siroheme from sirohydrochlorin: step 1/1. It functions in the pathway porphyrin-containing compound metabolism; siroheme biosynthesis; sirohydrochlorin from precorrin-2: step 1/1. Its function is as follows. Multifunctional enzyme that catalyzes the SAM-dependent methylations of uroporphyrinogen III at position C-2 and C-7 to form precorrin-2 via precorrin-1. Then it catalyzes the NAD-dependent ring dehydrogenation of precorrin-2 to yield sirohydrochlorin. Finally, it catalyzes the ferrochelation of sirohydrochlorin to yield siroheme. In Cronobacter sakazakii (strain ATCC BAA-894) (Enterobacter sakazakii), this protein is Siroheme synthase 1.